The primary structure comprises 352 residues: Hematopoietic SH2 domain-containing protein (352 aa).

Residues 34–125 (WFHGAISRED…PRRELLTQPC (92 aa)) form the SH2 domain. 2 disordered regions span residues 157-199 (EEAS…LGET) and 241-352 (VISG…PGYC). The segment covering 180 to 191 (RITTKEATSSCP) has biased composition (polar residues). Positions 283-295 (PKDRKVPTRKAER) are enriched in basic and acidic residues. Over residues 343-352 (QPPPFAPGYC) the composition is skewed to pro residues.

As to quaternary structure, interacts with FES and TNK2. Post-translationally, may be phosphorylated by FES and ACK1. In terms of tissue distribution, predominantly expressed in spleen and hematopoietic cells such as peripheral blood leukocytes and weakly expressed in prostate, thymus, heart, small intestine and placenta.

Its subcellular location is the cytoplasm. The protein resides in the nucleus. In terms of biological role, may be a modulator of the apoptotic response through its ability to affect mitochondrial stability. Adapter protein involved in tyrosine kinase and CD28 signaling. Seems to affect CD28-mediated activation of the RE/AP element of the interleukin-2 promoter. This is Hematopoietic SH2 domain-containing protein (HSH2D) from Homo sapiens (Human).